Here is a 134-residue protein sequence, read N- to C-terminus: U34-theraphotoxin-Cg1a (134 aa).

An N-terminal signal peptide occupies residues 1–19 (MKLAVVFLLTTVVFTLAQS). Intrachain disulfides connect Cys-24/Cys-35, Cys-29/Cys-53, and Cys-63/Cys-84. The disordered stretch occupies residues 97 to 134 (EQSSTSTSSTQGPITSSTVTTQSEATTETETTTAAEGK). The span at 99–134 (SSTSTSSTQGPITSSTVTTQSEATTETETTTAAEGK) shows a compositional bias: low complexity.

Belongs to the neurotoxin 32 family. Expressed by the venom gland.

The protein localises to the secreted. This chain is U34-theraphotoxin-Cg1a, found in Chilobrachys guangxiensis (Chinese earth tiger tarantula).